Consider the following 817-residue polypeptide: CD177 antigen (817 aa).

A signal peptide spans 1 to 21; the sequence is MNSIPVLTLLGVTALLPCVPA. The Extracellular portion of the chain corresponds to 22–796; it reads LTCQKSSAQA…PSLAWTLRLS (775 aa). 4 N-linked (GlcNAc...) asparagine glycosylation sites follow: Asn115, Asn189, Asn379, and Asn566. UPAR/Ly6 domains are found at residues 134–203, 322–393, 511–581, and 705–774; these read CPLC…SENC, CRHC…REDC, CPLC…ERCS, and CPMC…AEES. Residues 797–817 form a helical; Anchor for type IV membrane protein membrane-spanning segment; it reads AWMLGLSALLSSLYAGICPLC.

As to quaternary structure, found in a complex with integrin ITGAM/CD11b and ITGB2/CD18. Interacts with PECAM1 (via Ig-like C2-type domain 6); the interaction is Ca(2+)-dependent; the interaction is direct. Interacts with serine protease PRTN3/myeloblastin; the interaction tethers PRTN3 to the cell surface; the interaction is direct. In terms of tissue distribution, expressed in neutrophils.

It localises to the cell membrane. Its function is as follows. In association with beta-2 integrin heterodimer ITGAM/CD11b and ITGB2/CD18, mediates activation of TNF-alpha primed neutrophils including degranulation and superoxide production. In addition, by preventing beta-2 integrin internalization and attenuating chemokine signaling favors adhesion over migration. Heterophilic interaction with PECAM1 on endothelial cells plays a role in neutrophil transendothelial migration in vitro. However, appears to be dispensable for neutrophil recruitment caused by bacterial infection in vivo. Acts as a receptor for the mature form of protease PRTN3 allowing its display at the cell surface of neutrophils. By displaying PRTN3 at the neutrophil cell surface, may play a role in enhancing endothelial cell junctional integrity and thus vascular integrity during neutrophil diapedesis. This is CD177 antigen (Cd177) from Mus musculus (Mouse).